The chain runs to 155 residues: Large ribosomal subunit protein bL17 (155 aa).

It belongs to the bacterial ribosomal protein bL17 family. As to quaternary structure, part of the 50S ribosomal subunit. Contacts protein L32.

The sequence is that of Large ribosomal subunit protein bL17 from Syntrophotalea carbinolica (strain DSM 2380 / NBRC 103641 / GraBd1) (Pelobacter carbinolicus).